We begin with the raw amino-acid sequence, 318 residues long: GTP cyclohydrolase MptA (318 aa).

The protein belongs to the GTP cyclohydrolase IV family. In terms of assembly, homodimer. The cofactor is Fe(2+).

The enzyme catalyses GTP + H2O = 7,8-dihydroneopterin 2',3'-cyclic phosphate + formate + diphosphate + H(+). It functions in the pathway cofactor biosynthesis; 5,6,7,8-tetrahydromethanopterin biosynthesis. In terms of biological role, converts GTP to 7,8-dihydro-D-neopterin 2',3'-cyclic phosphate, the first intermediate in the biosynthesis of coenzyme methanopterin. This is GTP cyclohydrolase MptA from Methanosarcina acetivorans (strain ATCC 35395 / DSM 2834 / JCM 12185 / C2A).